We begin with the raw amino-acid sequence, 71 residues long: Small ribosomal subunit protein bS21 (71 aa).

Basic residues predominate over residues 48-59; it reads KAAAAVKRHAKK. The disordered stretch occupies residues 48–71; it reads KAAAAVKRHAKKVQREQRRRERLY. A compositionally biased stretch (basic and acidic residues) spans 60–71; sequence VQREQRRRERLY.

The protein belongs to the bacterial ribosomal protein bS21 family.

This chain is Small ribosomal subunit protein bS21, found in Azotobacter vinelandii (strain DJ / ATCC BAA-1303).